Consider the following 557-residue polypeptide: Dihydroxy-acid dehydratase (557 aa).

Asp78 provides a ligand contact to Mg(2+). Residue Cys119 participates in [2Fe-2S] cluster binding. Positions 120 and 121 each coordinate Mg(2+). Residue Lys121 is modified to N6-carboxylysine. Cys192 provides a ligand contact to [2Fe-2S] cluster. Glu442 contributes to the Mg(2+) binding site. Ser468 serves as the catalytic Proton acceptor.

This sequence belongs to the IlvD/Edd family. In terms of assembly, homodimer. [2Fe-2S] cluster serves as cofactor. Requires Mg(2+) as cofactor.

It carries out the reaction (2R)-2,3-dihydroxy-3-methylbutanoate = 3-methyl-2-oxobutanoate + H2O. The catalysed reaction is (2R,3R)-2,3-dihydroxy-3-methylpentanoate = (S)-3-methyl-2-oxopentanoate + H2O. It functions in the pathway amino-acid biosynthesis; L-isoleucine biosynthesis; L-isoleucine from 2-oxobutanoate: step 3/4. Its pathway is amino-acid biosynthesis; L-valine biosynthesis; L-valine from pyruvate: step 3/4. Its function is as follows. Functions in the biosynthesis of branched-chain amino acids. Catalyzes the dehydration of (2R,3R)-2,3-dihydroxy-3-methylpentanoate (2,3-dihydroxy-3-methylvalerate) into 2-oxo-3-methylpentanoate (2-oxo-3-methylvalerate) and of (2R)-2,3-dihydroxy-3-methylbutanoate (2,3-dihydroxyisovalerate) into 2-oxo-3-methylbutanoate (2-oxoisovalerate), the penultimate precursor to L-isoleucine and L-valine, respectively. The protein is Dihydroxy-acid dehydratase of Bacillus anthracis (strain A0248).